We begin with the raw amino-acid sequence, 229 residues long: Prolactin (229 aa).

The N-terminal stretch at 1–30 is a signal peptide; that stretch reads MDSKGSAQKGSRLLLLLVVSNLLLCQGVVS. C34 and C41 are oxidised to a cystine. Phosphoserine occurs at positions 56, 64, and 120. 2 disulfide bridges follow: C88–C204 and C221–C229.

The protein belongs to the somatotropin/prolactin family. As to quaternary structure, interacts with PRLR.

Its subcellular location is the secreted. Functionally, prolactin acts primarily on the mammary gland by promoting lactation. This Capra hircus (Goat) protein is Prolactin (PRL).